The chain runs to 141 residues: Small ribosomal subunit protein uS12 (141 aa).

The protein belongs to the universal ribosomal protein uS12 family. Part of the 30S ribosomal subunit.

Its function is as follows. With S4 and S5 plays an important role in translational accuracy. Located at the interface of the 30S and 50S subunits. In Methanothermobacter thermautotrophicus (strain ATCC 29096 / DSM 1053 / JCM 10044 / NBRC 100330 / Delta H) (Methanobacterium thermoautotrophicum), this protein is Small ribosomal subunit protein uS12.